Here is a 375-residue protein sequence, read N- to C-terminus: Deoxyribonuclease-2 (375 aa).

The first 21 residues, 1–21, serve as a signal peptide directing secretion; it reads MGLSPAAVLIFLLLGVSQTYA. A glycan (N-linked (GlcNAc...) asparagine) is linked at N131.

It belongs to the DNase II family.

The catalysed reaction is Endonucleolytic cleavage to nucleoside 3'-phosphates and 3'-phosphooligonucleotide end-products.. Its function is as follows. Hydrolyzes DNA under acidic conditions with a preference for double-stranded DNA. Implicated in apoptosis. The sequence is that of Deoxyribonuclease-2 (nuc-1) from Caenorhabditis elegans.